Reading from the N-terminus, the 662-residue chain is DNA helicase/primase complex-associated protein (662 aa).

Belongs to the herpesviridae HEPA family. Associates with the primase and the helicase to form the helicase-primase complex. Interacts with the origin-binding protein. Interacts with the polymerase catalytic subunit.

Its subcellular location is the host nucleus. Its function is as follows. Component of the helicase/primase complex. Unwinds the DNA at the replication forks and generates single-stranded DNA for both leading and lagging strand synthesis. The primase synthesizes short RNA primers on the lagging strand that the polymerase presumably elongates using dNTPs. The primase-associated factor has no known catalytic activity in the complex and may serve to facilitate the formation of the replisome by directly interacting with the origin-binding protein and the polymerase. This Human herpesvirus 6B (strain Z29) (HHV-6 variant B) protein is DNA helicase/primase complex-associated protein (U74).